A 460-amino-acid chain; its full sequence is CUGBP Elav-like family member 6 (460 aa).

The span at 1-10 (MAAAPGGSAP) shows a compositional bias: low complexity. The disordered stretch occupies residues 1-37 (MAAAPGGSAPPAGPSPRLAFSTADSGGGMSGLNPGPA). 2 consecutive RRM domains span residues 46–127 (IKLF…PAAS) and 134–214 (RKLF…LADT). Residues 316–336 (NGFGSLTPQSNGQPGSDTLYN) are disordered. Over residues 319–336 (GSLTPQSNGQPGSDTLYN) the composition is skewed to polar residues. The RRM 3 domain maps to 375 to 453 (CNLFIYHLPQ…KRLKVQLKRP (79 aa)).

This sequence belongs to the CELF/BRUNOL family.

The protein localises to the nucleus. Its subcellular location is the cytoplasm. In terms of biological role, RNA-binding protein implicated in the regulation of pre-mRNA alternative splicing. Mediates exon inclusion and/or exclusion in pre-mRNA that are subject to tissue-specific and developmentally regulated alternative splicing. Specifically activates exon 5 inclusion of TNNT2 in a muscle-specific splicing enhancer (MSE)-dependent manner. Promotes also exon exclusion of INSR pre-mRNA. This Mus musculus (Mouse) protein is CUGBP Elav-like family member 6 (Celf6).